We begin with the raw amino-acid sequence, 60 residues long: MAKKGNRVQVILECTEHKTSGQPGTSRYITTKNKKNTPDRIELKKFNPILKKMTVHKEIK.

This sequence belongs to the bacterial ribosomal protein bL33 family.

The polypeptide is Large ribosomal subunit protein bL33 (Christiangramia forsetii (strain DSM 17595 / CGMCC 1.15422 / KT0803) (Gramella forsetii)).